The primary structure comprises 638 residues: Neuroendocrine convertase 2 (638 aa).

Positions 1-25 (MKGGCVSQWKAAAGFLFCVMVFASA) are cleaved as a signal peptide. Positions 26–109 (ERPVFTNHFL…QQEGFDRKKR (84 aa)) are excised as a propeptide. The Peptidase S8 domain occupies 129 to 453 (QWYLINTGQA…YGVLDAGAMV (325 aa)). Active-site charge relay system residues include aspartate 167 and histidine 208. 2 disulfide bridges follow: cysteine 225-cysteine 376 and cysteine 317-cysteine 347. A glycan (N-linked (GlcNAc...) asparagine) is linked at asparagine 375. Serine 384 (charge relay system) is an active-site residue. The 137-residue stretch at 461–597 (TVPERFHCVG…TLMLHGTQSA (137 aa)) folds into the P/Homo B domain. Residues cysteine 468 and cysteine 494 are joined by a disulfide bond. N-linked (GlcNAc...) asparagine glycosylation is found at asparagine 514 and asparagine 524.

It belongs to the peptidase S8 family. Furin subfamily.

The protein localises to the cytoplasmic vesicle. The protein resides in the secretory vesicle. It localises to the secreted. It catalyses the reaction Release of protein hormones and neuropeptides from their precursors, generally by hydrolysis of -Lys-Arg-|- bonds.. Serine endopeptidase which is involved in the processing of hormone and other protein precursors at sites comprised of pairs of basic amino acid residues. Responsible for the release of glucagon from proglucagon in pancreatic A cells. This Pongo abelii (Sumatran orangutan) protein is Neuroendocrine convertase 2 (PCSK2).